A 140-amino-acid chain; its full sequence is Gonadotropin subunit beta-2 (140 aa).

The N-terminal stretch at 1–23 (MGTPVKILVVLFSVIVLLAVAQS) is a signal peptide. Disulfide bonds link Cys-29/Cys-77, Cys-43/Cys-92, Cys-46/Cys-130, Cys-54/Cys-108, Cys-58/Cys-110, and Cys-113/Cys-120. N-linked (GlcNAc...) asparagine glycosylation occurs at Asn-33.

The protein belongs to the glycoprotein hormones subunit beta family. In terms of assembly, heterodimer of an alpha and a beta chain.

It localises to the secreted. Its function is as follows. Involved in gametogenesis and steroidogenesis. In Carassius auratus (Goldfish), this protein is Gonadotropin subunit beta-2 (cgbb).